The following is a 1024-amino-acid chain: Beta-galactosidase 2 (1024 aa).

N103 and D202 together coordinate substrate. Residue D202 participates in Na(+) binding. Mg(2+) is bound by residues E417, H419, and E462. Substrate is bound by residues E462 and 538–541 (EYAH). Catalysis depends on E462, which acts as the Proton donor. E538 acts as the Nucleophile in catalysis. Position 598 (N598) interacts with Mg(2+). F602 and N605 together coordinate Na(+). N605 and W1000 together coordinate substrate.

The protein belongs to the glycosyl hydrolase 2 family. In terms of assembly, homotetramer. Requires Mg(2+) as cofactor. The cofactor is Na(+).

It catalyses the reaction Hydrolysis of terminal non-reducing beta-D-galactose residues in beta-D-galactosides.. The protein is Beta-galactosidase 2 of Klebsiella pneumoniae subsp. pneumoniae (strain ATCC 700721 / MGH 78578).